Here is a 217-residue protein sequence, read N- to C-terminus: GrpE protein homolog 1, mitochondrial (217 aa).

The N-terminal 27 residues, 1 to 27 (MAAQCVRLARRSLPALALSLRPSPRLL), are a transit peptide targeting the mitochondrion. A disordered region spans residues 29–56 (TATKQKNSGQNLEEDMGQSEQKADPPAT). A compositionally biased stretch (polar residues) spans 30–39 (ATKQKNSGQN). The residue at position 94 (lysine 94) is an N6-acetyllysine; alternate. Lysine 94 is modified (N6-succinyllysine; alternate). Residue lysine 100 is modified to N6-acetyllysine. The residue at position 120 (lysine 120) is an N6-succinyllysine. At lysine 215 the chain carries N6-acetyllysine; alternate. Lysine 215 carries the post-translational modification N6-succinyllysine; alternate.

Belongs to the GrpE family. In terms of assembly, probable component of the PAM complex at least composed of a mitochondrial HSP70 protein, GRPEL1 or GRPEL2, TIMM44, TIMM16/PAM16 and TIMM14/DNAJC19. Binds to HSP70, HSC70 and HSJ1B.

The protein resides in the mitochondrion matrix. Essential component of the PAM complex, a complex required for the translocation of transit peptide-containing proteins from the inner membrane into the mitochondrial matrix in an ATP-dependent manner. Seems to control the nucleotide-dependent binding of mitochondrial HSP70 to substrate proteins. This chain is GrpE protein homolog 1, mitochondrial (GRPEL1), found in Homo sapiens (Human).